The primary structure comprises 288 residues: Oxaloacetate decarboxylase (288 aa).

S47 lines the substrate pocket. D85 is a binding site for Mg(2+). 2 residues coordinate substrate: R156 and H232.

Belongs to the isocitrate lyase/PEP mutase superfamily. Oxaloacetate decarboxylase family. Homotetramer; dimer of dimers. Mg(2+) serves as cofactor.

It carries out the reaction oxaloacetate + H(+) = pyruvate + CO2. In terms of biological role, catalyzes the decarboxylation of oxaloacetate into pyruvate. Seems to play a role in maintaining cellular concentrations of bicarbonate and pyruvate. The protein is Oxaloacetate decarboxylase of Bradyrhizobium sp. (strain BTAi1 / ATCC BAA-1182).